Reading from the N-terminus, the 321-residue chain is Aspartate carbamoyltransferase catalytic subunit (321 aa).

2 residues coordinate carbamoyl phosphate: Arg65 and Thr66. Lys93 is a binding site for L-aspartate. The carbamoyl phosphate site is built by Arg115, His143, and Gln146. Residues Arg176 and Arg230 each coordinate L-aspartate. Residues Gly271 and Pro272 each coordinate carbamoyl phosphate.

The protein belongs to the aspartate/ornithine carbamoyltransferase superfamily. ATCase family. As to quaternary structure, heterododecamer (2C3:3R2) of six catalytic PyrB chains organized as two trimers (C3), and six regulatory PyrI chains organized as three dimers (R2).

It catalyses the reaction carbamoyl phosphate + L-aspartate = N-carbamoyl-L-aspartate + phosphate + H(+). Its pathway is pyrimidine metabolism; UMP biosynthesis via de novo pathway; (S)-dihydroorotate from bicarbonate: step 2/3. In terms of biological role, catalyzes the condensation of carbamoyl phosphate and aspartate to form carbamoyl aspartate and inorganic phosphate, the committed step in the de novo pyrimidine nucleotide biosynthesis pathway. The chain is Aspartate carbamoyltransferase catalytic subunit from Bartonella tribocorum (strain CIP 105476 / IBS 506).